Consider the following 196-residue polypeptide: Large ribosomal subunit protein eL15 (196 aa).

Basic residues-rich tracts occupy residues 160 to 172 and 186 to 196; these read ATRG…RKGR and PSIRAHKSRGK. The tract at residues 160-196 is disordered; it reads ATRGKTSAGRKGRGMSTRGKGTEKTRPSIRAHKSRGK.

The protein belongs to the eukaryotic ribosomal protein eL15 family.

In Methanosarcina mazei (strain ATCC BAA-159 / DSM 3647 / Goe1 / Go1 / JCM 11833 / OCM 88) (Methanosarcina frisia), this protein is Large ribosomal subunit protein eL15 (rpl15e).